The primary structure comprises 390 residues: Alkanesulfonate monooxygenase (390 aa).

Belongs to the SsuD family.

It catalyses the reaction an alkanesulfonate + FMNH2 + O2 = an aldehyde + FMN + sulfite + H2O + 2 H(+). Functionally, catalyzes the desulfonation of aliphatic sulfonates. The chain is Alkanesulfonate monooxygenase from Cupriavidus taiwanensis (strain DSM 17343 / BCRC 17206 / CCUG 44338 / CIP 107171 / LMG 19424 / R1) (Ralstonia taiwanensis (strain LMG 19424)).